The primary structure comprises 289 residues: Ribonuclease H2 subunit A (289 aa).

An RNase H type-2 domain is found at 20 to 249 (PFVMGIDEAG…TETAMRGACF (230 aa)). Residues Asp-26, Glu-27, and Asp-134 each coordinate a divalent metal cation.

It belongs to the RNase HII family. Eukaryotic subfamily. Requires Mn(2+) as cofactor. Mg(2+) serves as cofactor.

The enzyme catalyses Endonucleolytic cleavage to 5'-phosphomonoester.. Functionally, endonuclease that specifically degrades the RNA of RNA-DNA hybrids. Participates in DNA replication. The sequence is that of Ribonuclease H2 subunit A (rnaseh2A) from Dictyostelium discoideum (Social amoeba).